Consider the following 438-residue polypeptide: GTPase Der (438 aa).

EngA-type G domains are found at residues 4-168 (PVVA…PAGA) and 176-351 (VRIA…GEYR). GTP-binding positions include 10–17 (GRPNVGKS), 57–61 (DTGGI), 120–123 (NKVD), 182–189 (GRPNVGKS), 229–233 (DTAGM), and 294–297 (NKWD). A KH-like domain is found at 352–436 (RQIPTSMLNR…PVRILFRRRE (85 aa)).

The protein belongs to the TRAFAC class TrmE-Era-EngA-EngB-Septin-like GTPase superfamily. EngA (Der) GTPase family. As to quaternary structure, associates with the 50S ribosomal subunit.

GTPase that plays an essential role in the late steps of ribosome biogenesis. This chain is GTPase Der, found in Desulforudis audaxviator (strain MP104C).